A 172-amino-acid polypeptide reads, in one-letter code: Large ribosomal subunit protein uL10 (172 aa).

The protein belongs to the universal ribosomal protein uL10 family. In terms of assembly, part of the ribosomal stalk of the 50S ribosomal subunit. The N-terminus interacts with L11 and the large rRNA to form the base of the stalk. The C-terminus forms an elongated spine to which L12 dimers bind in a sequential fashion forming a multimeric L10(L12)X complex.

In terms of biological role, forms part of the ribosomal stalk, playing a central role in the interaction of the ribosome with GTP-bound translation factors. This Parvibaculum lavamentivorans (strain DS-1 / DSM 13023 / NCIMB 13966) protein is Large ribosomal subunit protein uL10.